The sequence spans 263 residues: 4-hydroxy-2-oxo-heptane-1,7-dioate aldolase (263 aa).

The active-site Proton acceptor is the H45. Q147 contributes to the substrate binding site. Residue E149 coordinates a divalent metal cation. Residues A174 and D175 each contribute to the substrate site. D175 is an a divalent metal cation binding site.

Belongs to the HpcH/HpaI aldolase family. In terms of assembly, homohexamer; trimer of dimers. The cofactor is a divalent metal cation.

It catalyses the reaction 4-hydroxy-2-oxoheptanedioate = succinate semialdehyde + pyruvate. The protein operates within aromatic compound metabolism; 4-hydroxyphenylacetate degradation; pyruvate and succinate semialdehyde from 4-hydroxyphenylacetate: step 7/7. In terms of biological role, catalyzes the reversible retro-aldol cleavage of 4-hydroxy-2-ketoheptane-1,7-dioate (HKHD) to pyruvate and succinic semialdehyde. This chain is 4-hydroxy-2-oxo-heptane-1,7-dioate aldolase, found in Salmonella dublin (strain CT_02021853).